A 492-amino-acid chain; its full sequence is 3-octaprenyl-4-hydroxybenzoate carboxy-lyase (492 aa).

A Mn(2+)-binding site is contributed by asparagine 177. Prenylated FMN-binding positions include 180-182, 194-196, and 199-200; these read IYR, RWL, and RG. Glutamate 243 lines the Mn(2+) pocket. The Proton donor role is filled by aspartate 292.

This sequence belongs to the UbiD family. As to quaternary structure, homohexamer. It depends on prenylated FMN as a cofactor. Mn(2+) is required as a cofactor.

Its subcellular location is the cell membrane. The catalysed reaction is a 4-hydroxy-3-(all-trans-polyprenyl)benzoate + H(+) = a 2-(all-trans-polyprenyl)phenol + CO2. The protein operates within cofactor biosynthesis; ubiquinone biosynthesis. Its function is as follows. Catalyzes the decarboxylation of 3-octaprenyl-4-hydroxy benzoate to 2-octaprenylphenol, an intermediate step in ubiquinone biosynthesis. This chain is 3-octaprenyl-4-hydroxybenzoate carboxy-lyase, found in Neisseria meningitidis serogroup B (strain ATCC BAA-335 / MC58).